The primary structure comprises 185 residues: MELVVQSRETDKKSVIKKIRQQGGIPAVLYSGGKSLANIVVDARVFSKFLSTLESGALASTVFTLSYEGREIKALVKDIQYHVTTYDVIHLDFEELVDGRDVRLNVPIRCINTVDCVGVKLGGSLRQVIRCIRVVCKPKDIVPFLELDVQSLGLSQTLKLSDICIPEGIRPVTSLKEVAVTVARR.

It belongs to the bacterial ribosomal protein bL25 family. CTC subfamily. Part of the 50S ribosomal subunit; part of the 5S rRNA/L5/L18/L25 subcomplex. Contacts the 5S rRNA. Binds to the 5S rRNA independently of L5 and L18.

Functionally, this is one of the proteins that binds to the 5S RNA in the ribosome where it forms part of the central protuberance. The protein is Large ribosomal subunit protein bL25 of Chlamydia trachomatis serovar L2 (strain ATCC VR-902B / DSM 19102 / 434/Bu).